We begin with the raw amino-acid sequence, 434 residues long: Protein FAM83A (434 aa).

The segment at 1–298 (MSRSRHLGKI…LYASSKPVMG (298 aa)) is DUF1669. The interval 76 to 97 (REPPCPPDTLGGAEAGPKGLDS) is disordered. Residues S301, S327, S348, and S357 each carry the phosphoserine modification. The interval 308–399 (VPPGAAPANG…HDGPPAAVYS (92 aa)) is disordered. Composition is skewed to low complexity over residues 320 to 332 (SSSS…RTSS) and 348 to 357 (SVSASSGPCS). Positions 358-369 (PAAPHPPPPPRF) are enriched in pro residues.

It belongs to the FAM83 family. As to quaternary structure, directly interacts (via DUF1669) with casein kinase isoforms CSNK1A1, CSNK1A1L, CSNK1D and CSNK1E. Phosphorylated upon EGFR activation in a breast cancer cell line.

The protein resides in the cytoplasm. In terms of biological role, involved in mitochondrial maintenance during adipogenesis. May be acting by playing a role in the maintenance of normal mitochondrial function. This Homo sapiens (Human) protein is Protein FAM83A.